A 247-amino-acid chain; its full sequence is UPF0309 protein GWCH70_1414 (247 aa).

The region spanning 31-214 (VSEAIQKGGI…VLMAENGFEP (184 aa)) is the SIS domain.

This sequence belongs to the UPF0309 family.

This chain is UPF0309 protein GWCH70_1414, found in Geobacillus sp. (strain WCH70).